The chain runs to 727 residues: Prolyl endopeptidase-like (727 aa).

Active-site charge relay system residues include serine 559, aspartate 645, and histidine 690.

Belongs to the peptidase S9A family. Homodimer. Interacts with the AP-1 complex.

The protein resides in the cytoplasm. It localises to the cytosol. Its subcellular location is the golgi apparatus. The protein localises to the trans-Golgi network. It is found in the cytoskeleton. The protein resides in the nucleus. Its function is as follows. Serine peptidase whose precise substrate specificity remains unclear. Does not cleave peptides after a arginine or lysine residue. Regulates trans-Golgi network morphology and sorting by regulating the membrane binding of the AP-1 complex. May play a role in the regulation of synaptic vesicle exocytosis. The chain is Prolyl endopeptidase-like (PREPL) from Macaca fascicularis (Crab-eating macaque).